We begin with the raw amino-acid sequence, 398 residues long: Probable purine permease 17 (398 aa).

The tract at residues 1–26 is disordered; the sequence is MEMSKASKQTTRHEESEHVQNPEPDQ. Residues 11-20 show a composition bias toward basic and acidic residues; sequence TRHEESEHVQ. Serine 29 carries the phosphoserine modification. 10 consecutive transmembrane segments (helical) span residues 43-63, 88-108, 127-147, 155-175, 183-203, 219-239, 258-278, 301-321, 332-352, and 355-375; these read ISVS…MLLL, WTQA…FFIF, LFFL…LFAL, GIFS…TAII, WIII…PDFG, WLAF…QLGF, VLEM…VGLF, VLSL…MIGL, VVHM…FDFM, and VFSW…GSYF.

It belongs to the purine permeases (TC 2.A.7.14) family.

The protein resides in the membrane. This Arabidopsis thaliana (Mouse-ear cress) protein is Probable purine permease 17 (PUP17).